The chain runs to 140 residues: Ribosome-binding factor A (140 aa).

The disordered stretch occupies residues 121–140 (KTEQTSADDDADRLDSEDRS).

The protein belongs to the RbfA family. As to quaternary structure, monomer. Binds 30S ribosomal subunits, but not 50S ribosomal subunits or 70S ribosomes.

The protein resides in the cytoplasm. One of several proteins that assist in the late maturation steps of the functional core of the 30S ribosomal subunit. Associates with free 30S ribosomal subunits (but not with 30S subunits that are part of 70S ribosomes or polysomes). Required for efficient processing of 16S rRNA. May interact with the 5'-terminal helix region of 16S rRNA. The sequence is that of Ribosome-binding factor A from Psychrobacter sp. (strain PRwf-1).